Reading from the N-terminus, the 658-residue chain is Interferon-induced GTP-binding protein Mx1 (658 aa).

The residue at position 1 (Met-1) is an N-acetylmethionine. Residues 1 to 20 are disordered; the sequence is MVNSKGKITDSDPGSSHLLL. The Dynamin-type G domain maps to 65-338; the sequence is DLALPAIAVI…LITHICKTLP (274 aa). The tract at residues 75-82 is G1 motif; it reads GDQSSGKS. Residue 75 to 82 coordinates GTP; the sequence is GDQSSGKS. The G2 motif stretch occupies residues 100–102; it reads VTR. Positions 176–179 are G3 motif; sequence DLPG. Residues 176-180 and 245-248 contribute to the GTP site; these read DLPGI and TKPD. The segment at 245–248 is G4 motif; it reads TKPD. The segment at 277-280 is G5 motif; the sequence is KCRG. The bundle signaling element (BSE) stretch occupies residues 339–364; that stretch reads LLEKQIKENYEKITEELQKYGSDVPE. The tract at residues 364–531 is middle domain; the sequence is EEEHEKMFFL…HFQMEQIVYC (168 aa). Residues 365–628 form a stalk region; the sequence is EEHEKMFFLI…KDTHNWLLKE (264 aa). A critical for lipid-binding region spans residues 551 to 554; that stretch reads KDKK. A GED domain is found at 570 to 658; that stretch reads LSDIFEHLLA…ARRRLAKFPG (89 aa).

The protein belongs to the TRAFAC class dynamin-like GTPase superfamily. Dynamin/Fzo/YdjA family. Homooligomer. Oligomerizes into multimeric filamentous or ring-like structures by virtue of its stalk domain. Oligomerization is critical for GTPase activity, protein stability, and recognition of viral target structures. Interacts with TRPC1, TRPC3, TRPC4, TRPC5, TRPC6 and TRPC7. Interacts with HSPA5. Interacts with TUBB/TUBB5. Interacts with DDX39A and DDX39B. In terms of processing, ISGylated.

Its subcellular location is the cytoplasm. It localises to the endoplasmic reticulum membrane. The protein resides in the perinuclear region. Interferon-induced dynamin-like GTPase with antiviral activity. This Otaria byronia (South American sea lion) protein is Interferon-induced GTP-binding protein Mx1 (MX1).